The following is a 629-amino-acid chain: MHGLLLAAGLLSLPLYTIAHTQPSGALSRRGVDLDAYRLPEKSSYTNTNDVQENSAILSLNAGSYVDVATKLVKQTIPSATFRVVDDHYISDTGLGHVYFRQTINGLDVDNADFNVNVGKDGKIFSFGNSFYTGKVPSASLTRDHSDPIQALNGARKALKLPVKTEKATARATNRGEYMFKGTSGALSEPTAKLVYIVKDDGSLALTWRVETDIGDNWLLSYVDAKDSDKVHNVVDYVAHATYQVYPWGINDPTEGSRQVFKDPWELPASPFTWISDGRQNYTTTRGNNGIAQNNPDGGTEYLNNYRPNSRNLRFEYRYSPSMNPPKSYTNASITQLFYSANTYHDLLYTLGFTEEAGNFQVSNGNRGGKGNDYVILNAQDGSGTNNANFATPPDGRPGRMRMYIWTRANPPRDGCFEAGIVIHEYTHGLSNRLTGGPDNTRCLNGLESGGMGEGWGDFYATAVRLKRNDTRNTVYAKSAWASNNPGGVRAYPYSTDFEINPLTYTSVNQLNEVHAVGTVWATMLYELLWNLIDKHGKNDGPKPVFRDGVPTDGKYLAMKIVLDGMKIQPCNPNFVQARDAILDADKALTGGENKCEIWTAFAKRELGTGARYNRNNRTGSKEVPNECK.

An N-terminal signal peptide occupies residues 1–19 (MHGLLLAAGLLSLPLYTIA). Positions 20–240 (HTQPSGALSR…VHNVVDYVAH (221 aa)) are excised as a propeptide. 2 N-linked (GlcNAc...) asparagine glycosylation sites follow: N281 and N331. H424 lines the Zn(2+) pocket. The active site involves E425. H428 is a Zn(2+) binding site. N-linked (GlcNAc...) asparagine glycosylation is found at N469 and N617.

It belongs to the peptidase M36 family. Requires Zn(2+) as cofactor.

Its subcellular location is the secreted. Its function is as follows. Secreted metalloproteinase that allows assimilation of proteinaceous substrates and probably acts as a virulence factor. This is Extracellular metalloproteinase 10 (MEP10) from Coccidioides posadasii (strain C735) (Valley fever fungus).